A 210-amino-acid polypeptide reads, in one-letter code: Isochorismatase domain-containing protein 2B (210 aa).

Lys-178 is subject to N6-succinyllysine.

Belongs to the isochorismatase family. As to quaternary structure, interacts with CDKN2A. As to expression, ubiquitous. Expressed predominantly in uterus, stomach and urinary tract.

It localises to the cytoplasm. The protein localises to the nucleus. This chain is Isochorismatase domain-containing protein 2B (Isoc2b), found in Mus musculus (Mouse).